We begin with the raw amino-acid sequence, 528 residues long: Probable feruloyl esterase B-1 (528 aa).

The first 19 residues, 1–19 (MMWWFLLIGLASAAATASS), serve as a signal peptide directing secretion. Intrachain disulfides connect Cys-29/Cys-78, Cys-64/Cys-117, Cys-190/Cys-445, Cys-259/Cys-276, Cys-285/Cys-295, and Cys-505/Cys-527. Asn-83 and Asn-101 each carry an N-linked (GlcNAc...) asparagine glycan. Catalysis depends on Ser-191, which acts as the Acyl-ester intermediate. Positions 260, 263, 265, 267, and 269 each coordinate Ca(2+). 3 N-linked (GlcNAc...) asparagine glycosylation sites follow: Asn-286, Asn-354, and Asn-385. Active-site charge relay system residues include Asp-404 and His-444.

Belongs to the tannase family.

It localises to the secreted. The catalysed reaction is feruloyl-polysaccharide + H2O = ferulate + polysaccharide.. In terms of biological role, involved in degradation of plant cell walls. Hydrolyzes the feruloyl-arabinose ester bond in arabinoxylans as well as the feruloyl-galactose and feruloyl-arabinose ester bonds in pectin. This chain is Probable feruloyl esterase B-1 (faeB-1), found in Aspergillus fumigatus (strain CBS 144.89 / FGSC A1163 / CEA10) (Neosartorya fumigata).